A 336-amino-acid polypeptide reads, in one-letter code: F420-dependent glucose-6-phosphate dehydrogenase (336 aa).

Coenzyme F420-(gamma-Glu)n is bound at residue Asp-39. Catalysis depends on His-40, which acts as the Proton donor. Residues Thr-76 and 107 to 108 (SG) contribute to the coenzyme F420-(gamma-Glu)n site. Glu-109 serves as the catalytic Proton acceptor. Residues Asn-112, 177–178 (GG), and 180–181 (VV) contribute to the coenzyme F420-(gamma-Glu)n site. 4 residues coordinate substrate: Thr-195, Lys-198, Lys-259, and Arg-283.

This sequence belongs to the F420-dependent glucose-6-phosphate dehydrogenase family. Homodimer.

It catalyses the reaction oxidized coenzyme F420-(gamma-L-Glu)(n) + D-glucose 6-phosphate + H(+) = 6-phospho-D-glucono-1,5-lactone + reduced coenzyme F420-(gamma-L-Glu)(n). Functionally, catalyzes the coenzyme F420-dependent oxidation of glucose 6-phosphate (G6P) to 6-phosphogluconolactone. This Tsukamurella paurometabola (strain ATCC 8368 / DSM 20162 / CCUG 35730 / CIP 100753 / JCM 10117 / KCTC 9821 / NBRC 16120 / NCIMB 702349 / NCTC 13040) (Corynebacterium paurometabolum) protein is F420-dependent glucose-6-phosphate dehydrogenase.